We begin with the raw amino-acid sequence, 488 residues long: Probable (S)-N-methylcoclaurine 3'-hydroxylase isozyme 2 (488 aa).

A helical membrane pass occupies residues 2–21 (EVLSIAIVSFSFLLFLFFIL). Residue Cys-427 participates in heme binding.

This sequence belongs to the cytochrome P450 family. It depends on heme as a cofactor. In terms of tissue distribution, expressed at low levels in roots.

It is found in the endoplasmic reticulum membrane. The protein resides in the microsome membrane. It catalyses the reaction (S)-N-methylcoclaurine + reduced [NADPH--hemoprotein reductase] + O2 = (S)-3'-hydroxy-N-methylcoclaurine + oxidized [NADPH--hemoprotein reductase] + H2O + H(+). It participates in alkaloid biosynthesis; (S)-reticuline biosynthesis; (S)-reticuline from (S)-norcoclaurine: step 3/4. In terms of biological role, 3'-hydroxylation of (S)-N-methylcoclaurine. This Coptis japonica (Japanese goldthread) protein is Probable (S)-N-methylcoclaurine 3'-hydroxylase isozyme 2 (CYP80B2).